The sequence spans 314 residues: GTPase Era (314 aa).

An Era-type G domain is found at 7-188 (RCGFAAVIGS…REFIAGLMPE (182 aa)). Residues 15 to 22 (GSPNAGKS) form a G1 region. Residue 15-22 (GSPNAGKS) coordinates GTP. Residues 41 to 45 (QTTRF) are G2. Positions 62 to 65 (DTPG) are G3. GTP is bound by residues 62 to 66 (DTPGV) and 138 to 141 (NKVD). The G4 stretch occupies residues 138–141 (NKVD). A G5 region spans residues 167 to 169 (ISA). The KH type-2 domain occupies 219-296 (LHEELPYASM…HLFLNVKVDA (78 aa)).

Belongs to the TRAFAC class TrmE-Era-EngA-EngB-Septin-like GTPase superfamily. Era GTPase family. Monomer.

Its subcellular location is the cytoplasm. It localises to the cell inner membrane. An essential GTPase that binds both GDP and GTP, with rapid nucleotide exchange. Plays a role in 16S rRNA processing and 30S ribosomal subunit biogenesis and possibly also in cell cycle regulation and energy metabolism. The polypeptide is GTPase Era (Maricaulis maris (strain MCS10) (Caulobacter maris)).